The following is a 441-amino-acid chain: AP-2 complex subunit mu (441 aa).

The MHD domain maps to Arg174–Arg440.

This sequence belongs to the adapter complexes medium subunit family. In terms of assembly, adapter protein complex 2 (AP-2) is a heterotetramer composed of two large adaptins (alpha-type subunit and beta-type subunits), a medium adaptin (mu-type subunit AP50) and a small adaptin (sigma-type subunit AP17). Brain, heart, lung, liver, testis and spleen.

It is found in the cell membrane. It localises to the membrane. Its subcellular location is the coated pit. In terms of biological role, component of the adapter complexes which link clathrin to receptors in coated vesicles. Clathrin-associated protein complexes are believed to interact with the cytoplasmic tails of membrane proteins, leading to their selection and concentration. AP50 is a subunit of the plasma membrane adapter. Essential wnt/egl-20 signaling protein that functions in wnt/egl-20-producing cells. Required for the AP-2 complex-mediated endocytosis of membrane proteins including wntless homolog mig-14 in egl-20-producing cells. During development, regulates the migration of HSN neurons and the left and right Q neuroblasts (QL and QR, respectively) and their descendants, possibly through hox gene and wnt/egl-20 gene target mab-5, and plays a role in establishing ALM and PLM neuronal cell polarity. Regulates AWB sensory neuron cilia membrane expansion during development, potentially via localization of tub-1 and PtdIns(4,5)P2 to the ciliary base. Required for the asymmetric divisions of V5 cells. The protein is AP-2 complex subunit mu (dpy-23) of Caenorhabditis elegans.